The following is a 34-amino-acid chain: Photosystem I reaction center subunit XII (34 aa).

Residues Val-4–Ala-24 form a helical membrane-spanning segment.

The protein belongs to the PsaM family.

The protein localises to the cellular thylakoid membrane. This Synechococcus sp. (strain CC9605) protein is Photosystem I reaction center subunit XII.